A 179-amino-acid chain; its full sequence is Small ribosomal subunit protein uS5c (179 aa).

One can recognise an S5 DRBM domain in the interval Phe-26 to Val-89.

It belongs to the universal ribosomal protein uS5 family. Part of the 30S ribosomal subunit. Contacts protein S4.

It is found in the plastid. The protein localises to the chloroplast. With S4 and S12 plays an important role in translational accuracy. The polypeptide is Small ribosomal subunit protein uS5c (rps5) (Thalassiosira pseudonana (Marine diatom)).